Here is a 126-residue protein sequence, read N- to C-terminus: Hydrogenase maturation factor HypA (126 aa).

Histidine 2 provides a ligand contact to Ni(2+). Residues cysteine 78, cysteine 81, cysteine 97, and cysteine 100 each coordinate Zn(2+).

This sequence belongs to the HypA/HybF family.

Involved in the maturation of [NiFe] hydrogenases. Required for nickel insertion into the metal center of the hydrogenase. The protein is Hydrogenase maturation factor HypA of Methanococcus maripaludis (strain C7 / ATCC BAA-1331).